We begin with the raw amino-acid sequence, 1124 residues long: Angiopoietin-1 receptor (1124 aa).

The N-terminal stretch at 1–22 (MDSLASLVLCGVSLLLSGTVEG) is a signal peptide. Residues 23–748 (AMDLILINSL…ADLGGGKMLL (726 aa)) lie on the Extracellular side of the membrane. Cysteine 44 and cysteine 102 form a disulfide bridge. The Ig-like C2-type 1 domain occupies 44–123 (CIASGWRPHE…RTMKMRQQAS (80 aa)). 2 N-linked (GlcNAc...) asparagine glycosylation sites follow: asparagine 140 and asparagine 158. 3 consecutive EGF-like domains span residues 210–252 (RCEA…RTCE), 254–299 (ACEL…LQCN), and 301–341 (ACHP…LQCE). 13 cysteine pairs are disulfide-bonded: cysteine 211–cysteine 220, cysteine 224–cysteine 233, cysteine 227–cysteine 240, cysteine 242–cysteine 251, cysteine 255–cysteine 264, cysteine 268–cysteine 274, cysteine 280–cysteine 287, cysteine 289–cysteine 298, cysteine 302–cysteine 311, cysteine 315–cysteine 323, cysteine 317–cysteine 329, cysteine 331–cysteine 340, and cysteine 370–cysteine 424. Residues 350-440 (PKIVDLPDHI…GMVEKPFNIS (91 aa)) enclose the Ig-like C2-type 2 domain. 7 N-linked (GlcNAc...) asparagine glycosylation sites follow: asparagine 399, asparagine 438, asparagine 464, asparagine 560, asparagine 596, asparagine 649, and asparagine 691. 3 consecutive Fibronectin type-III domains span residues 447–541 (PLNA…TASI), 545–636 (PPRG…TLSD), and 641–735 (QPEN…LPES). The chain crosses the membrane as a helical span at residues 749–769 (IAILGSAGMTCLTVLLAFLII). The Cytoplasmic portion of the chain corresponds to 770–1124 (LQLKRANVQR…GIDCSAEEAA (355 aa)). In terms of domain architecture, Protein kinase spans 824 to 1096 (IKFQDVIGEG…QILVSLNRML (273 aa)). Residues 830–838 (IGEGNFGQV) and lysine 855 each bind ATP. Tyrosine 860 carries the phosphotyrosine; by autocatalysis modification. Aspartate 964 acts as the Proton acceptor in catalysis. Tyrosine 992, tyrosine 1102, and tyrosine 1108 each carry phosphotyrosine; by autocatalysis.

Belongs to the protein kinase superfamily. Tyr protein kinase family. Tie subfamily. In terms of assembly, homodimer. Heterodimer with TIE1. Interacts with ANGPT1, ANGPT2 and ANGPT4. At cell-cell contacts in quiescent cells, forms a signaling complex composed of ANGPT1 plus TEK molecules from two adjoining cells. In the absence of endothelial cell-cell contacts, interaction with ANGPT1 mediates contacts with the extracellular matrix. Interacts with PTPRB; this promotes endothelial cell-cell adhesion. Interacts with DOK2, GRB2, GRB7, GRB14, PIK3R1 and PTPN11/SHP2. Colocalizes with DOK2 at contacts with the extracellular matrix in migrating cells. Interacts (tyrosine phosphorylated) with TNIP2. Interacts (tyrosine phosphorylated) with SHC1 (via SH2 domain). In terms of processing, proteolytic processing leads to the shedding of the extracellular domain (soluble TIE-2 alias sTIE-2). Autophosphorylated on tyrosine residues in response to ligand binding. Autophosphorylation occurs in trans, i.e. one subunit of the dimeric receptor phosphorylates tyrosine residues on the other subunit. Autophosphorylation occurs in a sequential manner, where Tyr-992 in the kinase activation loop is phosphorylated first, followed by autophosphorylation at Tyr-1108 and at additional tyrosine residues. ANGPT1-induced phosphorylation is impaired during hypoxia, due to increased expression of ANGPT2. Phosphorylation is important for interaction with GRB14, PIK3R1 and PTPN11. Phosphorylation at Tyr-1102 is important for interaction with SHC1, GRB2 and GRB7. Phosphorylation at Tyr-1108 is important for interaction with DOK2 and for coupling to downstream signal transduction pathways in endothelial cells. Dephosphorylated by PTPRB. Post-translationally, ubiquitinated. The phosphorylated receptor is ubiquitinated and internalized, leading to its degradation. As to expression, detected in umbilical vein endothelial cells. Proteolytic processing gives rise to a soluble extracellular domain that is detected in blood plasma (at protein level). Predominantly expressed in endothelial cells and their progenitors, the angioblasts. Has been directly found in placenta and lung, with a lower level in umbilical vein endothelial cells, brain and kidney.

The protein resides in the cell membrane. The protein localises to the cell junction. It is found in the focal adhesion. It localises to the cytoplasm. Its subcellular location is the cytoskeleton. The protein resides in the secreted. It carries out the reaction L-tyrosyl-[protein] + ATP = O-phospho-L-tyrosyl-[protein] + ADP + H(+). Angiopoietin binding leads to receptor dimerization and activation by autophosphorylation at Tyr-992 on the kinase activation loop. Inhibited by staurosporine, K252a, PP2, damnacanthal, SB203580, CEP-11207, CEP-11981 and CE-245677. Inhibited by triazine, thienopyrimidine and thiazolopyrimidine derivatives. In terms of biological role, tyrosine-protein kinase that acts as a cell-surface receptor for ANGPT1, ANGPT2 and ANGPT4 and regulates angiogenesis, endothelial cell survival, proliferation, migration, adhesion and cell spreading, reorganization of the actin cytoskeleton, but also maintenance of vascular quiescence. Has anti-inflammatory effects by preventing the leakage of pro-inflammatory plasma proteins and leukocytes from blood vessels. Required for normal angiogenesis and heart development during embryogenesis. Required for post-natal hematopoiesis. After birth, activates or inhibits angiogenesis, depending on the context. Inhibits angiogenesis and promotes vascular stability in quiescent vessels, where endothelial cells have tight contacts. In quiescent vessels, ANGPT1 oligomers recruit TEK to cell-cell contacts, forming complexes with TEK molecules from adjoining cells, and this leads to preferential activation of phosphatidylinositol 3-kinase and the AKT1 signaling cascades. In migrating endothelial cells that lack cell-cell adhesions, ANGT1 recruits TEK to contacts with the extracellular matrix, leading to the formation of focal adhesion complexes, activation of PTK2/FAK and of the downstream kinases MAPK1/ERK2 and MAPK3/ERK1, and ultimately to the stimulation of sprouting angiogenesis. ANGPT1 signaling triggers receptor dimerization and autophosphorylation at specific tyrosine residues that then serve as binding sites for scaffold proteins and effectors. Signaling is modulated by ANGPT2 that has lower affinity for TEK, can promote TEK autophosphorylation in the absence of ANGPT1, but inhibits ANGPT1-mediated signaling by competing for the same binding site. Signaling is also modulated by formation of heterodimers with TIE1, and by proteolytic processing that gives rise to a soluble TEK extracellular domain. The soluble extracellular domain modulates signaling by functioning as decoy receptor for angiopoietins. TEK phosphorylates DOK2, GRB7, GRB14, PIK3R1; SHC1 and TIE1. The chain is Angiopoietin-1 receptor from Homo sapiens (Human).